A 1405-amino-acid polypeptide reads, in one-letter code: DNA-directed RNA polymerase subunit beta' (1405 aa).

The Zn(2+) site is built by cysteine 71, cysteine 73, cysteine 86, and cysteine 89. Residues aspartate 462, aspartate 464, and aspartate 466 each coordinate Mg(2+). Zn(2+) contacts are provided by cysteine 820, cysteine 893, cysteine 900, and cysteine 903.

It belongs to the RNA polymerase beta' chain family. The RNAP catalytic core consists of 2 alpha, 1 beta, 1 beta' and 1 omega subunit. When a sigma factor is associated with the core the holoenzyme is formed, which can initiate transcription. Mg(2+) serves as cofactor. Zn(2+) is required as a cofactor.

The enzyme catalyses RNA(n) + a ribonucleoside 5'-triphosphate = RNA(n+1) + diphosphate. Its function is as follows. DNA-dependent RNA polymerase catalyzes the transcription of DNA into RNA using the four ribonucleoside triphosphates as substrates. The chain is DNA-directed RNA polymerase subunit beta' from Methylorubrum extorquens (strain CM4 / NCIMB 13688) (Methylobacterium extorquens).